The sequence spans 723 residues: Aspartate--tRNA(Asp/Asn) ligase 1 (723 aa).

Glu206 provides a ligand contact to L-aspartate. The tract at residues 230-233 is aspartate; sequence QLFK. Arg252 is a binding site for L-aspartate. Residues 252-254 and Gln261 each bind ATP; that span reads RDE. Residue His481 participates in L-aspartate binding. ATP is bound at residue Glu516. Arg523 is an L-aspartate binding site. 568–571 is an ATP binding site; it reads GMDR.

This sequence belongs to the class-II aminoacyl-tRNA synthetase family. Type 1 subfamily. In terms of assembly, homodimer.

Its subcellular location is the cytoplasm. The enzyme catalyses tRNA(Asx) + L-aspartate + ATP = L-aspartyl-tRNA(Asx) + AMP + diphosphate. In terms of biological role, aspartyl-tRNA synthetase with relaxed tRNA specificity since it is able to aspartylate not only its cognate tRNA(Asp) but also tRNA(Asn). Reaction proceeds in two steps: L-aspartate is first activated by ATP to form Asp-AMP and then transferred to the acceptor end of tRNA(Asp/Asn). This Syntrophus aciditrophicus (strain SB) protein is Aspartate--tRNA(Asp/Asn) ligase 1.